Here is a 330-residue protein sequence, read N- to C-terminus: D-lactate dehydrogenase (330 aa).

NAD(+) is bound by residues 156–157 (RI), Asp176, 206–207 (VP), 233–235 (AAR), and Asp259. The active site involves Arg235. Residue Glu264 is part of the active site. The active-site Proton donor is the His296.

This sequence belongs to the D-isomer specific 2-hydroxyacid dehydrogenase family.

It carries out the reaction (R)-lactate + NAD(+) = pyruvate + NADH + H(+). In Staphylococcus aureus (strain MRSA252), this protein is D-lactate dehydrogenase (ldhD).